A 380-amino-acid polypeptide reads, in one-letter code: Cytochrome b (380 aa).

4 helical membrane-spanning segments follow: residues 33-53 (FGSLLGLCLMIQILTGLFLAM), 77-98 (WLIRYMHANGASMFFICLFLHV), 113-133 (WNMGIVLLFAVMATAFMGYVL), and 178-198 (FFAFHFILPFIITALVLVHLL). Heme b-binding residues include His83 and His97. 2 residues coordinate heme b: His182 and His196. His201 contacts a ubiquinone. The next 4 membrane-spanning stretches (helical) occupy residues 226–246 (IKDLLGALLLLTALMILVLFF), 288–308 (LGGVLALILSILILAFMPLLH), 320–340 (ITQTMYWILVSDLLILTWIGG), and 347–367 (FIMIGQVASITYFAIIVIFMP).

It belongs to the cytochrome b family. As to quaternary structure, the cytochrome bc1 complex contains 11 subunits: 3 respiratory subunits (MT-CYB, CYC1 and UQCRFS1), 2 core proteins (UQCRC1 and UQCRC2) and 6 low-molecular weight proteins (UQCRH/QCR6, UQCRB/QCR7, UQCRQ/QCR8, UQCR10/QCR9, UQCR11/QCR10 and a cleavage product of UQCRFS1). This cytochrome bc1 complex then forms a dimer. Requires heme b as cofactor.

It is found in the mitochondrion inner membrane. Its function is as follows. Component of the ubiquinol-cytochrome c reductase complex (complex III or cytochrome b-c1 complex) that is part of the mitochondrial respiratory chain. The b-c1 complex mediates electron transfer from ubiquinol to cytochrome c. Contributes to the generation of a proton gradient across the mitochondrial membrane that is then used for ATP synthesis. The protein is Cytochrome b (MT-CYB) of Synaptomys borealis (Northern bog lemming).